The sequence spans 243 residues: Terpene cyclase dpasB (243 aa).

A run of 7 helical transmembrane segments spans residues 16–36, 50–70, 79–99, 112–132, 141–161, 172–189, and 207–227; these read VVWV…SNYI, MALM…FIYP, IHTL…RYGA, LPVI…AFAE, AVSG…QLLC, LWLA…PNML, and IWFL…LWYV.

It belongs to the paxB family.

It is found in the membrane. Its pathway is secondary metabolite biosynthesis; terpenoid biosynthesis. Terpene cyclase; part of the gene cluster that mediates the biosynthesis of the diterpenoid pyrones subglutinols A and B. The first step of the pathway is the synthesis of the alpha-pyrone moiety by the polyketide synthase dpasA via condensation of one acetyl-CoA starter unit with 3 malonyl-CoA units and 2 methylations. The alpha-pyrone is then combined with geranylgeranyl pyrophosphate (GGPP) formed by the GGPP synthase dpasD through the action of the prenyltransferase dpasC to yield a linear alpha-pyrone diterpenoid. Subsequent steps in the diterpenoid pyrone biosynthetic pathway involve the decalin core formation, which is initiated by the epoxidation of the C10-C11 olefin by the FAD-dependent oxidoreductase dpasE, and is followed by a cyclization cascade catalyzed by the terpene cyclase dpasB. The FAD-linked oxidoreductase dpasF is then involved in tetrahydrofuran (THF) ring formation at the C5 unit to complete the formation of subglutinols A and B. DpasF possesses also an additional catalytic ability of multi-step oxidations to generate a new DDP analog with an enone system at the C5 named FDDP A. The chain is Terpene cyclase dpasB from Apiospora sacchari (Arthrinium sacchari).